The following is a 993-amino-acid chain: Serine/threonine-protein phosphatase 6 regulatory ankyrin repeat subunit B (993 aa).

28 ANK repeats span residues 7–36 (CEQP…DVNA), 40–69 (EKRT…RVNA), 73–102 (MWLT…DVNA), 106–135 (NWQT…SVNV), 139–168 (GGRT…NINA), 172–201 (KDRR…EVTC), 205–234 (KGYT…EIDE), 238–267 (YGNT…NVNQ), 271–301 (SGFT…DVNI), 305–334 (DGKS…EIDC), 338–367 (DGNT…DTAK), 371–400 (HSMF…EIDT), 404–433 (FGRT…DFHK), 437–466 (CGRT…NVNE), 470–498 (WGRT…DNSE), 531–561 (EGYN…GFEE), 566–595 (ALKS…DLDI), 599–628 (KGRT…SIFV), 633–662 (TKRT…NPEV), 669–698 (KGQT…NVDA), 702–731 (VGCT…SILC), 735–764 (RGRT…SEED), 771–800 (QGYT…FRKF), 803–832 (NPFT…PSIV), 838–867 (KGRT…QVNA), 871–901 (SGKT…DLTV), 905–934 (DLNT…DESL), and 941–970 (ALQT…CVLA). The tract at residues 974–993 (NASRSNGPRSPPGTAVRKEE) is disordered.

Protein phosphatase 6 (PP6) holoenzyme is proposed to be a heterotrimeric complex formed by the catalytic subunit, a SAPS domain-containing subunit (PP6R) and an ankyrin repeat-domain containing regulatory subunit (ARS). Interacts with PPP6R1.

In terms of biological role, putative regulatory subunit of protein phosphatase 6 (PP6) that may be involved in the recognition of phosphoprotein substrates. This is Serine/threonine-protein phosphatase 6 regulatory ankyrin repeat subunit B (Ankrd44) from Mus musculus (Mouse).